The following is a 321-amino-acid chain: Putative glucan endo-1,3-beta-glucosidase GVI (321 aa).

A signal peptide spans 1–6 (LAGVEG). The active-site Proton donor is the Glu100. The active-site Nucleophile is Glu241.

This sequence belongs to the glycosyl hydrolase 17 family.

It carries out the reaction Hydrolysis of (1-&gt;3)-beta-D-glucosidic linkages in (1-&gt;3)-beta-D-glucans.. Its function is as follows. May provide a degree of protection against microbial invasion of germinated barley grain through its ability to degrade fungal cell wall polysaccharides. This is Putative glucan endo-1,3-beta-glucosidase GVI from Hordeum vulgare (Barley).